The following is a 196-amino-acid chain: Endonuclease V (196 aa).

Residues aspartate 37 and aspartate 98 each coordinate Mg(2+).

It belongs to the endonuclease V family. Requires Mg(2+) as cofactor.

Its subcellular location is the cytoplasm. The enzyme catalyses Endonucleolytic cleavage at apurinic or apyrimidinic sites to products with a 5'-phosphate.. DNA repair enzyme involved in the repair of deaminated bases. Selectively cleaves double-stranded DNA at the second phosphodiester bond 3' to a deoxyinosine leaving behind the intact lesion on the nicked DNA. This Sulfolobus acidocaldarius (strain ATCC 33909 / DSM 639 / JCM 8929 / NBRC 15157 / NCIMB 11770) protein is Endonuclease V.